A 145-amino-acid polypeptide reads, in one-letter code: Putative pre-16S rRNA nuclease (145 aa).

This sequence belongs to the YqgF nuclease family.

It localises to the cytoplasm. Could be a nuclease involved in processing of the 5'-end of pre-16S rRNA. This Pseudomonas fluorescens (strain ATCC BAA-477 / NRRL B-23932 / Pf-5) protein is Putative pre-16S rRNA nuclease.